A 175-amino-acid chain; its full sequence is RNA pyrophosphohydrolase (175 aa).

The Nudix hydrolase domain maps to 7-150 (GYRLNVGIIL…KRQVYIQALK (144 aa)). The Nudix box motif lies at 39–60 (GGLAPGETAMQAMYRELHEEVG).

Belongs to the Nudix hydrolase family. RppH subfamily. It depends on a divalent metal cation as a cofactor.

Its function is as follows. Accelerates the degradation of transcripts by removing pyrophosphate from the 5'-end of triphosphorylated RNA, leading to a more labile monophosphorylated state that can stimulate subsequent ribonuclease cleavage. This is RNA pyrophosphohydrolase from Legionella pneumophila (strain Paris).